The following is a 359-amino-acid chain: tRNA pseudouridine synthase B (359 aa).

The Nucleophile role is filled by D63.

It belongs to the pseudouridine synthase TruB family. Type 1 subfamily.

It carries out the reaction uridine(55) in tRNA = pseudouridine(55) in tRNA. Responsible for synthesis of pseudouridine from uracil-55 in the psi GC loop of transfer RNAs. The polypeptide is tRNA pseudouridine synthase B (Psychrobacter cryohalolentis (strain ATCC BAA-1226 / DSM 17306 / VKM B-2378 / K5)).